The sequence spans 153 residues: UPF0235 protein C15orf40 (153 aa).

The span at 1–12 (MLRLRSGLRHLR) shows a compositional bias: basic residues. Residues 1–55 (MLRLRSGLRHLRATPNTRGSARLLCAEMPKKAGATTKGKSQSKEPERPLPPLGPV) form a disordered region. Serine 116 bears the Phosphoserine mark.

Belongs to the UPF0235 family.

This Homo sapiens (Human) protein is UPF0235 protein C15orf40 (C15orf40).